Consider the following 178-residue polypeptide: MSRIGKKTIVIPAGVTVTLNGSTATVKGPKGELVKEFNPEITIKIEGNEINVSRPTDNKNHRALHGTTRAILNNMVVGVSEGYEKKLELIGVGYRAQKQGDKLVLNVGYSHPVEFVAPKGVDIEVPANTQVIVKGYNKEHVGELAANIRAVRPPEPYKGKGIRYEGEHVRRKEGKTGK.

The protein belongs to the universal ribosomal protein uL6 family. Part of the 50S ribosomal subunit.

Functionally, this protein binds to the 23S rRNA, and is important in its secondary structure. It is located near the subunit interface in the base of the L7/L12 stalk, and near the tRNA binding site of the peptidyltransferase center. The protein is Large ribosomal subunit protein uL6 of Listeria monocytogenes serotype 4a (strain HCC23).